The sequence spans 90 residues: Probable Fe(2+)-trafficking protein (90 aa).

It belongs to the Fe(2+)-trafficking protein family. Monomer.

Functionally, could be a mediator in iron transactions between iron acquisition and iron-requiring processes, such as synthesis and/or repair of Fe-S clusters in biosynthetic enzymes. This Yersinia enterocolitica serotype O:8 / biotype 1B (strain NCTC 13174 / 8081) protein is Probable Fe(2+)-trafficking protein.